The primary structure comprises 478 residues: Ribulose bisphosphate carboxylase large chain (478 aa).

The propeptide occupies 1-2 (MS). Proline 3 bears the N-acetylproline mark. N6,N6,N6-trimethyllysine is present on lysine 14. Residues asparagine 123 and threonine 173 each contribute to the substrate site. Catalysis depends on lysine 175, which acts as the Proton acceptor. Residue lysine 177 coordinates substrate. 3 residues coordinate Mg(2+): lysine 201, aspartate 203, and glutamate 204. Lysine 201 bears the N6-carboxylysine mark. Catalysis depends on histidine 294, which acts as the Proton acceptor. Positions 295, 327, and 379 each coordinate substrate.

It belongs to the RuBisCO large chain family. Type I subfamily. Heterohexadecamer of 8 large chains and 8 small chains; disulfide-linked. The disulfide link is formed within the large subunit homodimers. Mg(2+) is required as a cofactor. In terms of processing, the disulfide bond which can form in the large chain dimeric partners within the hexadecamer appears to be associated with oxidative stress and protein turnover.

It localises to the plastid. It is found in the chloroplast. The catalysed reaction is 2 (2R)-3-phosphoglycerate + 2 H(+) = D-ribulose 1,5-bisphosphate + CO2 + H2O. It carries out the reaction D-ribulose 1,5-bisphosphate + O2 = 2-phosphoglycolate + (2R)-3-phosphoglycerate + 2 H(+). Its function is as follows. RuBisCO catalyzes two reactions: the carboxylation of D-ribulose 1,5-bisphosphate, the primary event in carbon dioxide fixation, as well as the oxidative fragmentation of the pentose substrate in the photorespiration process. Both reactions occur simultaneously and in competition at the same active site. This Lemna minor (Common duckweed) protein is Ribulose bisphosphate carboxylase large chain.